A 286-amino-acid polypeptide reads, in one-letter code: Release factor glutamine methyltransferase (286 aa).

S-adenosyl-L-methionine is bound by residues 120–124 (GTGSG), D143, W172, and N187. 187–190 (NPPY) contacts substrate.

This sequence belongs to the protein N5-glutamine methyltransferase family. PrmC subfamily.

It catalyses the reaction L-glutaminyl-[peptide chain release factor] + S-adenosyl-L-methionine = N(5)-methyl-L-glutaminyl-[peptide chain release factor] + S-adenosyl-L-homocysteine + H(+). In terms of biological role, methylates the class 1 translation termination release factors RF1/PrfA and RF2/PrfB on the glutamine residue of the universally conserved GGQ motif. The sequence is that of Release factor glutamine methyltransferase from Gloeobacter violaceus (strain ATCC 29082 / PCC 7421).